The primary structure comprises 322 residues: FAD-dependent monooxygenase subE (322 aa).

FAD-binding residues include glutamate 35, glycine 49, arginine 108, and aspartate 313.

Belongs to the paxM FAD-dependent monooxygenase family. FAD serves as cofactor.

It participates in secondary metabolite biosynthesis; terpenoid biosynthesis. FAD-dependent monooxygenase; part of the gene cluster that mediates the biosynthesis of the immunosuppressants subglutinols, meroterpenoids consisting of an alpha-pyrone (4-hydroxy-5,6-dimethyl-2-pyrone) moiety attached to a decalin core fused to a five-membered cyclic ether carrying a prenylside chain. The first step of the pathway is the synthesis of the alpha-pyrone moiety by the polyketide synthase subA via condensation of one acetyl-CoA starter unit with 3 malonyl-CoA units and 2 methylations. The alpha-pyrone is then combined with geranylgeranyl pyrophosphate (GGPP) formed by the GGPP synthase subD through the action of the prenyltransferase subC to yield a linear alpha-pyrone diterpenoid. Subsequent steps in the subglutinol biosynthetic pathway involve the decalin core formation, which is thought to be initiated by the epoxidation of the C10-C11 olefin by the FAD-dependent oxidoreductase subE. The following cyclization cascade would be catalyzed by the terpene cyclase subB. Lastly, the FAD-dependent dehydrogenase subF probably catalyzes the five-membered cyclic ether formation to complete the formation of subglutinol A. Subsequent redox reactions appear to give rise to subglutinol C and D, however, it remains unclear which enzymes are responsible for these transformations. SubD may have secondary function in the conversion of the identified subglutinols to subglutinol analog 45, which seems to be the major product of the cluster. This chain is FAD-dependent monooxygenase subE, found in Metarhizium robertsii (strain ARSEF 23 / ATCC MYA-3075) (Metarhizium anisopliae (strain ARSEF 23)).